The primary structure comprises 266 residues: UPF0354 protein LMHCC_0955 (266 aa).

It belongs to the UPF0354 family.

The polypeptide is UPF0354 protein LMHCC_0955 (Listeria monocytogenes serotype 4a (strain HCC23)).